Reading from the N-terminus, the 396-residue chain is Lipid-A-disaccharide synthase (396 aa).

The protein belongs to the LpxB family.

The catalysed reaction is a lipid X + a UDP-2-N,3-O-bis[(3R)-3-hydroxyacyl]-alpha-D-glucosamine = a lipid A disaccharide + UDP + H(+). Its pathway is bacterial outer membrane biogenesis; LPS lipid A biosynthesis. Its function is as follows. Condensation of UDP-2,3-diacylglucosamine and 2,3-diacylglucosamine-1-phosphate to form lipid A disaccharide, a precursor of lipid A, a phosphorylated glycolipid that anchors the lipopolysaccharide to the outer membrane of the cell. This Nitrobacter hamburgensis (strain DSM 10229 / NCIMB 13809 / X14) protein is Lipid-A-disaccharide synthase.